A 199-amino-acid polypeptide reads, in one-letter code: Interleukin-11 (199 aa).

The N-terminal stretch at 1–21 (MNCVCRLVLVVLSLWPDTAVA) is a signal peptide. The segment at 182 to 190 (HLTLDWAVR) is important for interaction with IL11RA and for the stimulation of cell proliferation.

Belongs to the IL-6 superfamily. As to quaternary structure, interacts with IL11RA to associate with IL6ST, giving rise to a multimeric signaling complex.

It is found in the secreted. Cytokine that stimulates the proliferation of hematopoietic stem cells and megakaryocyte progenitor cells and induces megakaryocyte maturation resulting in increased platelet production. Also promotes the proliferation of hepatocytes in response to liver damage. Binding to its receptor formed by IL6ST and IL11RA activates a signaling cascade that promotes cell proliferation. Signaling leads to the activation of intracellular protein kinases and the phosphorylation of STAT3. The interaction with the membrane-bound IL11RA and IL6ST stimulates 'classic signaling', whereas the binding of IL11 and soluble IL11RA to IL6ST stimulates 'trans-signaling'. The polypeptide is Interleukin-11 (IL11) (Macaca fascicularis (Crab-eating macaque)).